Consider the following 486-residue polypeptide: NADH-quinone oxidoreductase subunit N (486 aa).

14 consecutive transmembrane segments (helical) span residues 8 to 28 (LTAL…ILSI), 36 to 56 (FVAV…YFLI), 74 to 94 (ILYI…SYPW), 104 to 124 (EFYL…ISHH), 125 to 145 (MASF…LIAY), 160 to 180 (IILS…VYSI), 201 to 221 (ILVV…KLSI), 239 to 259 (VLSF…LNFL), 269 to 289 (VIYF…NLMA), 298 to 318 (FLGY…LVSH), 329 to 349 (AIYL…VNLI), 376 to 396 (SVLT…GFIG), 410 to 432 (WLIG…RIIL), and 459 to 479 (IVIC…NPLI).

This sequence belongs to the complex I subunit 2 family. As to quaternary structure, NDH-1 is composed of 13 different subunits. Subunits NuoA, H, J, K, L, M, N constitute the membrane sector of the complex.

The protein localises to the cell membrane. The enzyme catalyses a quinone + NADH + 5 H(+)(in) = a quinol + NAD(+) + 4 H(+)(out). Functionally, NDH-1 shuttles electrons from NADH, via FMN and iron-sulfur (Fe-S) centers, to quinones in the respiratory chain. The immediate electron acceptor for the enzyme in this species is believed to be ubiquinone. Couples the redox reaction to proton translocation (for every two electrons transferred, four hydrogen ions are translocated across the cytoplasmic membrane), and thus conserves the redox energy in a proton gradient. This Buchnera aphidicola subsp. Acyrthosiphon pisum (strain APS) (Acyrthosiphon pisum symbiotic bacterium) protein is NADH-quinone oxidoreductase subunit N.